We begin with the raw amino-acid sequence, 492 residues long: RNA-binding protein Nova-2 (492 aa).

A Bipartite nuclear localization signal motif is present at residues K10–N26. The 68-residue stretch at E32–I99 folds into the KH 1 domain. K112 participates in a covalent cross-link: Glycyl lysine isopeptide (Lys-Gly) (interchain with G-Cter in SUMO2). 2 consecutive KH domains span residues A130–I196 and K406–I473.

Interacts with PTBP2; the interaction is direct. As to expression, brain. Expression restricted to astrocytes.

Its subcellular location is the nucleus. Its function is as follows. Functions to regulate alternative splicing in neurons by binding pre-mRNA in a sequence-specific manner to activate exon inclusion or exclusion. It binds specifically to the sequences 5'-YCAY-3' and regulates splicing in only a subset of regulated exons. Binding to an exonic 5'-YCAY-3' cluster changes the protein complexes assembled on pre-mRNA, blocking U1 snRNP binding and exon inclusion, whereas binding to an intronic 5'-YCAY-3' cluster enhances spliceosome assembly and exon inclusion. With NOVA1, they perform unique biological functions in different brain areas and cell types. Uniquely regulates alternative splicing events of a series of axon guidance related genes during cortical development, being essential for central nervous system development by regulating neural networks wiring. Regulates differentially alternative splicing on the same transcripts expressed in different neurons. This includes functional differences in transcripts expressed in cortical and cerebellar excitatory versus inhibitory neurons where is required for, respectively, development of laminar structure and motor coordination and synapse formation. Also the regulation the regulation of intron retention can sequester the trans-acting splicing factor PTBP2, acting as a variable cis-acting scaffolding platform for PTBP2 across various natural conditions. This is RNA-binding protein Nova-2 from Homo sapiens (Human).